The chain runs to 214 residues: Probable chemoreceptor glutamine deamidase CheD (214 aa).

The protein belongs to the CheD family.

It carries out the reaction L-glutaminyl-[protein] + H2O = L-glutamyl-[protein] + NH4(+). Probably deamidates glutamine residues to glutamate on methyl-accepting chemotaxis receptors (MCPs), playing an important role in chemotaxis. The chain is Probable chemoreceptor glutamine deamidase CheD from Vibrio vulnificus (strain CMCP6).